Consider the following 104-residue polypeptide: Large ribosomal subunit protein uL24 (104 aa).

Belongs to the universal ribosomal protein uL24 family. In terms of assembly, part of the 50S ribosomal subunit.

In terms of biological role, one of two assembly initiator proteins, it binds directly to the 5'-end of the 23S rRNA, where it nucleates assembly of the 50S subunit. Functionally, one of the proteins that surrounds the polypeptide exit tunnel on the outside of the subunit. This Nitrobacter winogradskyi (strain ATCC 25391 / DSM 10237 / CIP 104748 / NCIMB 11846 / Nb-255) protein is Large ribosomal subunit protein uL24.